The sequence spans 144 residues: High mobility group B protein 2 (144 aa).

Composition is skewed to basic and acidic residues over residues 1 to 12 (MKGAKSKTETRS) and 73 to 94 (AGDK…KAEK). Disordered regions lie at residues 1–42 (MKGA…KRPA), 57–94 (KKEN…KAEK), and 106–144 (YNKK…EDDD). A DNA-binding region (HMG box) is located at residues 38–107 (PKRPASAFFV…EYEKNIKAYN (70 aa)). Phosphoserine is present on Ser125. Positions 127-144 (VNDEDDAEDGSEEEEDDD) are enriched in acidic residues.

It belongs to the HMGB family. Mostly expressed in cotyledons, hypocotyls, leaves, and flowers (excluding pedicels), also present in roots and stems.

The protein localises to the nucleus. Its subcellular location is the cytoplasm. It is found in the cytosol. Binds preferentially double-stranded DNA. Confers sensitivity to salt and drought stresses. This Arabidopsis thaliana (Mouse-ear cress) protein is High mobility group B protein 2 (HMGB2).